A 418-amino-acid polypeptide reads, in one-letter code: MGLTLTQKILSAKAGREVKPGELIEIDVDMVLGNDITAPVAIKEFEKIGVDKVFDNTKIALVPDHFVPSKDIKSAEQVNVMRKFAKKYNIVNFFEVGRMGIEHALLPEQGLVLPGDVVIGADSHTCTYGALTCFATGVGSTDMAAAMATGKAWFKVPEAIKFVLKGNLGKWVSGKDVILYIIGKIGVDGALYKSMEFTGNIKALSIDDRFTIANMAIEAGAKNGIFDFDEITEAYVKKRAKREYKVFERDEDAEYSEVIEINLDDIRPQVAFPHLPENTRSIDEVGKVKIDQVVIGSCTNGRLSDMEIAYRILKGKKVHPDVRLIIFPATQEIYLECVKRGYIEEFIKAGAAVSTPTCGPCLGGHMGVLAKGERALATTNRNFVGRMGHPESEVYLASPAVAAASAIAGYIVSPEEVE.

[4Fe-4S] cluster contacts are provided by Cys298, Cys358, and Cys361.

The protein belongs to the aconitase/IPM isomerase family. LeuC type 2 subfamily. As to quaternary structure, heterodimer of LeuC and LeuD. [4Fe-4S] cluster is required as a cofactor.

The catalysed reaction is (2R,3S)-3-isopropylmalate = (2S)-2-isopropylmalate. Its pathway is amino-acid biosynthesis; L-leucine biosynthesis; L-leucine from 3-methyl-2-oxobutanoate: step 2/4. Catalyzes the isomerization between 2-isopropylmalate and 3-isopropylmalate, via the formation of 2-isopropylmaleate. This is 3-isopropylmalate dehydratase large subunit from Caldanaerobacter subterraneus subsp. tengcongensis (strain DSM 15242 / JCM 11007 / NBRC 100824 / MB4) (Thermoanaerobacter tengcongensis).